The sequence spans 188 residues: Pupal cuticle protein Edg-84A (188 aa).

The first 17 residues, 1 to 17 (MLVKTALFVTLIGLAQA), serve as a signal peptide directing secretion. The interval 19–67 (PLPAKSSGSEDTYDSHPQYSFNYDVQDPETGDVKSQSESRDGDVVHGQY) is disordered. Residues 24 to 41 (SSGSEDTYDSHPQYSFNY) show a composition bias toward polar residues. Residues 34–100 (HPQYSFNYDV…AVVRREPLSS (67 aa)) form the Chitin-binding type R&amp;R domain. Residues 49 to 62 (GDVKSQSESRDGDV) are compositionally biased toward basic and acidic residues.

As to expression, imaginal (anterior) epidermis.

Its function is as follows. Component of the cuticle of the pupa of fruit fly. This is Pupal cuticle protein Edg-84A (Edg84A) from Drosophila melanogaster (Fruit fly).